Reading from the N-terminus, the 447-residue chain is N-succinylarginine dihydrolase (447 aa).

Substrate contacts are provided by residues 19-28, asparagine 110, and 137-138; these read AGLSFGNEAS and HR. Glutamate 174 is a catalytic residue. Residue arginine 212 participates in substrate binding. Histidine 248 is an active-site residue. Residues aspartate 250 and asparagine 359 each coordinate substrate. Cysteine 365 functions as the Nucleophile in the catalytic mechanism.

Belongs to the succinylarginine dihydrolase family. As to quaternary structure, homodimer.

The catalysed reaction is N(2)-succinyl-L-arginine + 2 H2O + 2 H(+) = N(2)-succinyl-L-ornithine + 2 NH4(+) + CO2. The protein operates within amino-acid degradation; L-arginine degradation via AST pathway; L-glutamate and succinate from L-arginine: step 2/5. Its function is as follows. Catalyzes the hydrolysis of N(2)-succinylarginine into N(2)-succinylornithine, ammonia and CO(2). This is N-succinylarginine dihydrolase from Salmonella agona (strain SL483).